A 34-amino-acid chain; its full sequence is Photosystem II reaction center protein M (34 aa).

A helical transmembrane segment spans residues 5 to 25 (ILGLTATALFIIIPTSFLLIL).

The protein belongs to the PsbM family. In terms of assembly, PSII is composed of 1 copy each of membrane proteins PsbA, PsbB, PsbC, PsbD, PsbE, PsbF, PsbH, PsbI, PsbJ, PsbK, PsbL, PsbM, PsbT, PsbX, PsbY, PsbZ, Psb30/Ycf12, at least 3 peripheral proteins of the oxygen-evolving complex and a large number of cofactors. It forms dimeric complexes.

The protein localises to the plastid. Its subcellular location is the chloroplast thylakoid membrane. Functionally, one of the components of the core complex of photosystem II (PSII). PSII is a light-driven water:plastoquinone oxidoreductase that uses light energy to abstract electrons from H(2)O, generating O(2) and a proton gradient subsequently used for ATP formation. It consists of a core antenna complex that captures photons, and an electron transfer chain that converts photonic excitation into a charge separation. This subunit is found at the monomer-monomer interface. The protein is Photosystem II reaction center protein M of Stigeoclonium helveticum (Green alga).